Reading from the N-terminus, the 220-residue chain is Ribonuclease HII (220 aa).

In terms of domain architecture, RNase H type-2 spans 16 to 216 (PVFAGIDEAG…VRPNPAAEEQ (201 aa)). 3 residues coordinate a divalent metal cation: aspartate 22, glutamate 23, and aspartate 114.

The protein belongs to the RNase HII family. Mn(2+) serves as cofactor. The cofactor is Mg(2+).

The protein localises to the cytoplasm. The enzyme catalyses Endonucleolytic cleavage to 5'-phosphomonoester.. Its function is as follows. Endonuclease that specifically degrades the RNA of RNA-DNA hybrids. In Nitratidesulfovibrio vulgaris (strain ATCC 29579 / DSM 644 / CCUG 34227 / NCIMB 8303 / VKM B-1760 / Hildenborough) (Desulfovibrio vulgaris), this protein is Ribonuclease HII.